The sequence spans 479 residues: Ribosomal RNA small subunit methyltransferase F (479 aa).

S-adenosyl-L-methionine-binding positions include 125–131 (AAAPGSK), Glu149, Asp176, and Asp194. The active-site Nucleophile is Cys247.

The protein belongs to the class I-like SAM-binding methyltransferase superfamily. RsmB/NOP family.

The protein resides in the cytoplasm. The enzyme catalyses cytidine(1407) in 16S rRNA + S-adenosyl-L-methionine = 5-methylcytidine(1407) in 16S rRNA + S-adenosyl-L-homocysteine + H(+). Functionally, specifically methylates the cytosine at position 1407 (m5C1407) of 16S rRNA. The chain is Ribosomal RNA small subunit methyltransferase F (rsmF) from Escherichia coli (strain K12).